Here is a 345-residue protein sequence, read N- to C-terminus: MQLDDRKLKILQAIIRNYLETGEPVGSRTISKYTDLNLSSATIRNEMSDLEELGYIIQPHTSAGRIPSDKGYRLYVDTMMEDKVTEVENMRDMLLEKADKMETLLQQVARLLAVNTNYATMVTSPQYRSRKVKFLQVSEVDTTQILTIIVLEGNIVKNKIIAIAEPLDKETLLKLNIVLNTFLQGLDLSEINLALIRQMKEQAAEHSSVVSDILDAVAQAISEEDDIQIFTSGATNILKYPELNDMEKASELLYTLEEKKQLTNLMNNEVSSGENRGIQVYIGNETPVDSMKDCAVVTATYQIEEGVYGKIGIIGPKRMDYEKVVSTLQNLMCQLDDIFKKDNDR.

The protein belongs to the HrcA family.

In terms of biological role, negative regulator of class I heat shock genes (grpE-dnaK-dnaJ and groELS operons). Prevents heat-shock induction of these operons. This Lachnoclostridium phytofermentans (strain ATCC 700394 / DSM 18823 / ISDg) (Clostridium phytofermentans) protein is Heat-inducible transcription repressor HrcA.